The following is a 204-amino-acid chain: Tumor necrosis factor alpha-induced protein 8-like protein 3 (204 aa).

Acidic residues predominate over residues 1 to 10 (MDSDSGEQSE). Residues 1 to 20 (MDSDSGEQSEGEPGTAAGPH) are disordered. Residues 21-204 (VFSSKNLALQ…INKLLDDKIL (184 aa)) form a binding to phosphoinositides region.

It belongs to the TNFAIP8 family. In terms of tissue distribution, widely expressed (at protein level).

The protein localises to the cytoplasm. Its subcellular location is the cell membrane. Its function is as follows. Acts as a lipid transfer protein. Preferentially captures and shuttles two lipid second messengers, i.e., phosphatidylinositol 4,5- bisphosphate and phosphatidylinositol 3,4,5-trisphosphate and increases their levels in the plasma membrane. Additionally, may also function as a lipid-presenting protein to enhance the activity of the PI3K-AKT and MEK-ERK pathways. May act as a regulator of tumorigenesis through its activation of phospholipid signaling. In Mus musculus (Mouse), this protein is Tumor necrosis factor alpha-induced protein 8-like protein 3 (Tnfaip8l3).